Here is a 287-residue protein sequence, read N- to C-terminus: N-methyltransferase verN (287 aa).

It belongs to the methyltransferase superfamily. LaeA methyltransferase family.

It participates in mycotoxin biosynthesis. Its function is as follows. N-methyltransferase; part of the gene cluster that mediates the biosynthesis of 11'-deoxyverticillin A, one of the dimeric epipolythiodioxopiperazines (ETPs) from the verticillin family that act as mycotoxins. 11'-deoxyverticillin A is required for normal conidiation. The nonribosomal peptide synthetase verP is speculated to be responsible for condensation of amino acids to form the carbon skeleton of verticillin, whereas the cluster-specific tailoring enzymes are involved in further modifications leading to the production of 11'-deoxyverticillin A. The chain is N-methyltransferase verN from Clonostachys rogersoniana.